Reading from the N-terminus, the 410-residue chain is Elongation factor Tu, chloroplastic (410 aa).

A tr-type G domain is found at 10–215; the sequence is KPHINIGTIG…MVDKYFPTPE (206 aa). Residues 19-26 form a G1 region; that stretch reads GHVDHGKT. 19-26 lines the GTP pocket; that stretch reads GHVDHGKT. T26 provides a ligand contact to Mg(2+). Positions 61–65 are G2; sequence GITIN. Residues 82–85 form a G3 region; it reads DCPG. GTP is bound by residues 82–86 and 137–140; these read DCPGH and NKAD. The G4 stretch occupies residues 137 to 140; it reads NKAD. The G5 stretch occupies residues 175-177; that stretch reads SAL.

This sequence belongs to the TRAFAC class translation factor GTPase superfamily. Classic translation factor GTPase family. EF-Tu/EF-1A subfamily.

Its subcellular location is the plastid. It is found in the chloroplast. It catalyses the reaction GTP + H2O = GDP + phosphate + H(+). GTP hydrolase that promotes the GTP-dependent binding of aminoacyl-tRNA to the A-site of ribosomes during protein biosynthesis. The chain is Elongation factor Tu, chloroplastic (tufA) from Cyanidium caldarium (Red alga).